A 630-amino-acid chain; its full sequence is 1-deoxy-D-xylulose-5-phosphate synthase (630 aa).

Thiamine diphosphate contacts are provided by residues histidine 72 and 113-115 (GHS). Residue aspartate 144 participates in Mg(2+) binding. Thiamine diphosphate-binding positions include 145-146 (GA), asparagine 173, tyrosine 284, and glutamate 367. Asparagine 173 is a binding site for Mg(2+).

The protein belongs to the transketolase family. DXPS subfamily. As to quaternary structure, homodimer. The cofactor is Mg(2+). Thiamine diphosphate serves as cofactor.

It catalyses the reaction D-glyceraldehyde 3-phosphate + pyruvate + H(+) = 1-deoxy-D-xylulose 5-phosphate + CO2. It participates in metabolic intermediate biosynthesis; 1-deoxy-D-xylulose 5-phosphate biosynthesis; 1-deoxy-D-xylulose 5-phosphate from D-glyceraldehyde 3-phosphate and pyruvate: step 1/1. In terms of biological role, catalyzes the acyloin condensation reaction between C atoms 2 and 3 of pyruvate and glyceraldehyde 3-phosphate to yield 1-deoxy-D-xylulose-5-phosphate (DXP). This Bacillus mycoides (strain KBAB4) (Bacillus weihenstephanensis) protein is 1-deoxy-D-xylulose-5-phosphate synthase.